The primary structure comprises 458 residues: UDP-N-acetylmuramoylalanine--D-glutamate ligase (458 aa).

Residue 124 to 130 participates in ATP binding; that stretch reads GSDGKTT.

This sequence belongs to the MurCDEF family.

It is found in the cytoplasm. The catalysed reaction is UDP-N-acetyl-alpha-D-muramoyl-L-alanine + D-glutamate + ATP = UDP-N-acetyl-alpha-D-muramoyl-L-alanyl-D-glutamate + ADP + phosphate + H(+). It participates in cell wall biogenesis; peptidoglycan biosynthesis. In terms of biological role, cell wall formation. Catalyzes the addition of glutamate to the nucleotide precursor UDP-N-acetylmuramoyl-L-alanine (UMA). This is UDP-N-acetylmuramoylalanine--D-glutamate ligase from Clostridium botulinum (strain Loch Maree / Type A3).